The following is a 94-amino-acid chain: YcgL domain-containing protein VP0875 (94 aa).

The 84-residue stretch at 1 to 84 (MLCSIYKSSK…PPENLLEKYK (84 aa)) folds into the YcgL domain.

This Vibrio parahaemolyticus serotype O3:K6 (strain RIMD 2210633) protein is YcgL domain-containing protein VP0875.